The sequence spans 430 residues: Adenylosuccinate synthetase (430 aa).

Residues 13 to 19 (GDEGKGK) and 41 to 43 (GHT) contribute to the GTP site. Asp-14 functions as the Proton acceptor in the catalytic mechanism. Asp-14 and Gly-41 together coordinate Mg(2+). Residues 14 to 17 (DEGK), 39 to 42 (NAGH), Thr-130, Arg-144, Gln-225, Thr-240, and Arg-304 each bind IMP. The active-site Proton donor is the His-42. Position 300-306 (300-306 (STTGRAR)) interacts with substrate. GTP contacts are provided by residues Arg-306, 332 to 334 (KLD), and 414 to 416 (STG).

It belongs to the adenylosuccinate synthetase family. As to quaternary structure, homodimer. The cofactor is Mg(2+).

The protein resides in the cytoplasm. The enzyme catalyses IMP + L-aspartate + GTP = N(6)-(1,2-dicarboxyethyl)-AMP + GDP + phosphate + 2 H(+). It participates in purine metabolism; AMP biosynthesis via de novo pathway; AMP from IMP: step 1/2. In terms of biological role, plays an important role in the de novo pathway of purine nucleotide biosynthesis. Catalyzes the first committed step in the biosynthesis of AMP from IMP. The polypeptide is Adenylosuccinate synthetase (Azotobacter vinelandii (strain DJ / ATCC BAA-1303)).